The chain runs to 449 residues: Glucose-6-phosphate isomerase (449 aa).

The Proton donor role is filled by E291. Active-site residues include H312 and K426.

It belongs to the GPI family.

The protein resides in the cytoplasm. It catalyses the reaction alpha-D-glucose 6-phosphate = beta-D-fructose 6-phosphate. It participates in carbohydrate biosynthesis; gluconeogenesis. It functions in the pathway carbohydrate degradation; glycolysis; D-glyceraldehyde 3-phosphate and glycerone phosphate from D-glucose: step 2/4. Catalyzes the reversible isomerization of glucose-6-phosphate to fructose-6-phosphate. In Streptococcus pyogenes serotype M4 (strain MGAS10750), this protein is Glucose-6-phosphate isomerase.